We begin with the raw amino-acid sequence, 204 residues long: Recombination protein RecR (204 aa).

A C4-type zinc finger spans residues 58–75 (CTICQNITDVGTDPCAIC). Residues 83–181 (TVICVVESPV…AVTKIARGIP (99 aa)) form the Toprim domain.

The protein belongs to the RecR family.

In terms of biological role, may play a role in DNA repair. It seems to be involved in an RecBC-independent recombinational process of DNA repair. It may act with RecF and RecO. In Chlorobium chlorochromatii (strain CaD3), this protein is Recombination protein RecR.